Reading from the N-terminus, the 338-residue chain is Holliday junction branch migration complex subunit RuvB (338 aa).

The segment at 1-181 is large ATPase domain (RuvB-L); sequence MTRTITPSIT…FGVISRLEFY (181 aa). ATP contacts are provided by residues L20, R21, G62, K65, T66, T67, 128 to 130, R171, Y181, and R218; that span reads EDF. Position 66 (T66) interacts with Mg(2+). A small ATPAse domain (RuvB-S) region spans residues 182 to 252; it reads TDEELAFIIT…VVQDALALLE (71 aa). A head domain (RuvB-H) region spans residues 255 to 338; sequence EMGFDQMDRM…VPEPPQGKLF (84 aa). DNA is bound by residues R310 and R315.

This sequence belongs to the RuvB family. As to quaternary structure, homohexamer. Forms an RuvA(8)-RuvB(12)-Holliday junction (HJ) complex. HJ DNA is sandwiched between 2 RuvA tetramers; dsDNA enters through RuvA and exits via RuvB. An RuvB hexamer assembles on each DNA strand where it exits the tetramer. Each RuvB hexamer is contacted by two RuvA subunits (via domain III) on 2 adjacent RuvB subunits; this complex drives branch migration. In the full resolvosome a probable DNA-RuvA(4)-RuvB(12)-RuvC(2) complex forms which resolves the HJ.

Its subcellular location is the cytoplasm. The catalysed reaction is ATP + H2O = ADP + phosphate + H(+). Its function is as follows. The RuvA-RuvB-RuvC complex processes Holliday junction (HJ) DNA during genetic recombination and DNA repair, while the RuvA-RuvB complex plays an important role in the rescue of blocked DNA replication forks via replication fork reversal (RFR). RuvA specifically binds to HJ cruciform DNA, conferring on it an open structure. The RuvB hexamer acts as an ATP-dependent pump, pulling dsDNA into and through the RuvAB complex. RuvB forms 2 homohexamers on either side of HJ DNA bound by 1 or 2 RuvA tetramers; 4 subunits per hexamer contact DNA at a time. Coordinated motions by a converter formed by DNA-disengaged RuvB subunits stimulates ATP hydrolysis and nucleotide exchange. Immobilization of the converter enables RuvB to convert the ATP-contained energy into a lever motion, pulling 2 nucleotides of DNA out of the RuvA tetramer per ATP hydrolyzed, thus driving DNA branch migration. The RuvB motors rotate together with the DNA substrate, which together with the progressing nucleotide cycle form the mechanistic basis for DNA recombination by continuous HJ branch migration. Branch migration allows RuvC to scan DNA until it finds its consensus sequence, where it cleaves and resolves cruciform DNA. This is Holliday junction branch migration complex subunit RuvB from Geotalea uraniireducens (strain Rf4) (Geobacter uraniireducens).